The primary structure comprises 466 residues: Soluble pyridine nucleotide transhydrogenase (466 aa).

36–45 (ERYHNVGGGC) serves as a coordination point for FAD.

Belongs to the class-I pyridine nucleotide-disulfide oxidoreductase family. Requires FAD as cofactor.

The protein resides in the cytoplasm. It carries out the reaction NAD(+) + NADPH = NADH + NADP(+). In terms of biological role, conversion of NADPH, generated by peripheral catabolic pathways, to NADH, which can enter the respiratory chain for energy generation. The sequence is that of Soluble pyridine nucleotide transhydrogenase from Salmonella gallinarum (strain 287/91 / NCTC 13346).